The following is a 621-amino-acid chain: UvrABC system protein C (621 aa).

Residues 20 to 98 (MAPGVYCMYA…IKSLAPRYNV (79 aa)) form the GIY-YIG domain. Positions 207-242 (DLLAEELIQAMQVASEHLEFEQAARLRDLLTSLRSM) constitute a UVR domain.

This sequence belongs to the UvrC family. As to quaternary structure, interacts with UvrB in an incision complex.

Its subcellular location is the cytoplasm. In terms of biological role, the UvrABC repair system catalyzes the recognition and processing of DNA lesions. UvrC both incises the 5' and 3' sides of the lesion. The N-terminal half is responsible for the 3' incision and the C-terminal half is responsible for the 5' incision. The sequence is that of UvrABC system protein C from Xylella fastidiosa (strain 9a5c).